The primary structure comprises 103 residues: Large ribosomal subunit protein bL21 (103 aa).

Belongs to the bacterial ribosomal protein bL21 family. Part of the 50S ribosomal subunit. Contacts protein L20.

This protein binds to 23S rRNA in the presence of protein L20. The chain is Large ribosomal subunit protein bL21 from Desulfotalea psychrophila (strain LSv54 / DSM 12343).